Reading from the N-terminus, the 319-residue chain is Serine acetyltransferase, plasmid (319 aa).

It belongs to the transferase hexapeptide repeat family.

Its subcellular location is the cytoplasm. It carries out the reaction L-serine + acetyl-CoA = O-acetyl-L-serine + CoA. The protein operates within amino-acid biosynthesis; L-cysteine biosynthesis; L-cysteine from L-serine: step 1/2. The chain is Serine acetyltransferase, plasmid (srpH) from Synechococcus elongatus (strain ATCC 33912 / PCC 7942 / FACHB-805) (Anacystis nidulans R2).